The primary structure comprises 438 residues: ATP-dependent protease ATPase subunit HslU (438 aa).

ATP-binding positions include Ile18, 60 to 65 (GVGKTE), Asp251, Glu316, and Arg388.

It belongs to the ClpX chaperone family. HslU subfamily. As to quaternary structure, a double ring-shaped homohexamer of HslV is capped on each side by a ring-shaped HslU homohexamer. The assembly of the HslU/HslV complex is dependent on binding of ATP.

The protein resides in the cytoplasm. Functionally, ATPase subunit of a proteasome-like degradation complex; this subunit has chaperone activity. The binding of ATP and its subsequent hydrolysis by HslU are essential for unfolding of protein substrates subsequently hydrolyzed by HslV. HslU recognizes the N-terminal part of its protein substrates and unfolds these before they are guided to HslV for hydrolysis. The protein is ATP-dependent protease ATPase subunit HslU of Jannaschia sp. (strain CCS1).